We begin with the raw amino-acid sequence, 87 residues long: U15-lycotoxin-Ls1f (87 aa).

Positions 1-20 (MNSKIFAVLLLLGLLSCVLS) are cleaved as a signal peptide. Positions 21 to 66 (DQYCPKSSITACKKMNIRNDCCKDDDCTGGSWCCATPCGNFCKYPT) constitute a WAP domain. 5 disulfide bridges follow: C24–C54, C32–C58, C41–C53, C42–C80, and C47–C62.

It belongs to the venom protein 11 family. 01 (wap-1) subfamily. In terms of processing, contains 5 disulfide bonds. As to expression, expressed by the venom gland.

Its subcellular location is the secreted. In terms of biological role, has antibacterial activity. This chain is U15-lycotoxin-Ls1f, found in Lycosa singoriensis (Wolf spider).